A 588-amino-acid chain; its full sequence is Pre-mRNA-splicing ATP-dependent RNA helicase PRP28 (588 aa).

The interval Asn15 to His94 is disordered. 2 stretches are compositionally biased toward basic and acidic residues: residues Asn35–Glu49 and Ala60–Arg83. Ser69 carries the post-translational modification Phosphoserine. Positions Arg172–Arg202 match the Q motif motif. Residues Val208–Ala399 enclose the Helicase ATP-binding domain. An ATP-binding site is contributed by Ala221–Thr228. The short motif at Asp341–Asp344 is the DEAD box element. The 153-residue stretch at Lys427–Gly579 folds into the Helicase C-terminal domain.

The protein belongs to the DEAD box helicase family. DDX23/PRP28 subfamily. Component of the U5 snRNP complex, composed of at least BRR2, PRP8, PRP28, DIB1, LIN1, SMB1, SMD1, SMD2, SMD3, SME1, SMX2, SMX3, and SNU114, associated with the U5 snRNA.

The protein localises to the cytoplasm. It localises to the nucleus. The enzyme catalyses ATP + H2O = ADP + phosphate + H(+). ATP-dependent RNA helicase involved in mRNA splicing. May destabilize the U1/5'-splice site duplex to permit an effective competition for the 5'-splice site by the U6 snRNA, resulting in the switch between U1 and U6 at the 5'-splice site. May also act to unwind the U4/U6 base-pairing interaction in the U4/U6/U5 snRNP, facilitating the first covalent step of splicing. In Saccharomyces cerevisiae (strain ATCC 204508 / S288c) (Baker's yeast), this protein is Pre-mRNA-splicing ATP-dependent RNA helicase PRP28 (PRP28).